We begin with the raw amino-acid sequence, 171 residues long: Co-chaperone protein HscB (171 aa).

The J domain occupies 2–74; sequence DYFTLFGLPA…LMRAEYLLSL (73 aa).

This sequence belongs to the HscB family. In terms of assembly, interacts with HscA and stimulates its ATPase activity. Interacts with IscU.

Functionally, co-chaperone involved in the maturation of iron-sulfur cluster-containing proteins. Seems to help targeting proteins to be folded toward HscA. The chain is Co-chaperone protein HscB from Escherichia coli (strain SE11).